We begin with the raw amino-acid sequence, 138 residues long: Mu-like prophage FluMu G protein 2 (138 aa).

The protein to phage Mu protein G.

The polypeptide is Mu-like prophage FluMu G protein 2 (Haemophilus influenzae (strain ATCC 51907 / DSM 11121 / KW20 / Rd)).